A 493-amino-acid chain; its full sequence is Alpha-amylase-related protein (493 aa).

Positions 1–19 (MFKFALALTLCLAGSLSLA) are cleaved as a signal peptide. At Gln20 the chain carries Pyrrolidone carboxylic acid. A disulfide bridge connects residues Cys47 and Cys103. Ca(2+) is bound by residues Asn117, Gln168, and Asp177. A disulfide bridge links Cys156 with Cys170. Arg205 is a chloride binding site. The Nucleophile role is filled by Asp207. His211 provides a ligand contact to Ca(2+). Glu244 serves as the catalytic Proton donor. Positions 307 and 342 each coordinate chloride. Intrachain disulfides connect Cys375/Cys381, Cys417/Cys440, and Cys447/Cys459.

This sequence belongs to the glycosyl hydrolase 13 family. As to quaternary structure, monomer. Requires Ca(2+) as cofactor. It depends on chloride as a cofactor.

Its subcellular location is the secreted. It catalyses the reaction Endohydrolysis of (1-&gt;4)-alpha-D-glucosidic linkages in polysaccharides containing three or more (1-&gt;4)-alpha-linked D-glucose units.. The sequence is that of Alpha-amylase-related protein (Amyrel) from Drosophila elegans (Fruit fly).